The primary structure comprises 109 residues: Parvalbumin beta-1 (109 aa).

Serine 2 carries the post-translational modification N-acetylserine. EF-hand domains lie at 39–74 and 78–109; these read KSHEEVKKAFFVIDQDQSGFIEEDELKLFLQTFGAG and LTAAETKAFLAAGDEDGDGMIGVDEFVTLVKA. Ca(2+) is bound by residues aspartate 52, aspartate 54, serine 56, phenylalanine 58, glutamate 60, glutamate 63, aspartate 91, aspartate 93, aspartate 95, methionine 97, and glutamate 102.

The protein belongs to the parvalbumin family.

In muscle, parvalbumin is thought to be involved in relaxation after contraction. It binds two calcium ions. The polypeptide is Parvalbumin beta-1 (Gadus chalcogrammus (Alaska pollock)).